A 436-amino-acid chain; its full sequence is Acrosin (436 aa).

The first 19 residues, 1–19 (MVEMLPTVAVLVLAVSVVA), serve as a signal peptide directing secretion. N-linked (GlcNAc...) asparagine glycosylation is present at N22. 6 disulfides stabilise this stretch: C25–C155, C29–C163, C74–C90, C178–C247, C210–C226, and C237–C267. The 249-residue stretch at 43–291 (IVSGQSAQLG…YLDWIASKIG (249 aa)) folds into the Peptidase S1 domain. Catalysis depends on charge relay system residues H89 and D143. N211 is a glycosylation site (N-linked (GlcNAc...) asparagine). The Charge relay system role is filled by S241. Positions 346–436 (PSSTQTSSSL…NKPSEPFLHS (91 aa)) are cleaved as a propeptide — pro-rich.

It belongs to the peptidase S1 family. In terms of assembly, heavy chain (catalytic) and a light chain linked by two disulfide bonds. Forms a heterodimer with SERPINA5.

The catalysed reaction is Preferential cleavage: Arg-|-Xaa, Lys-|-Xaa.. With respect to regulation, inhibited by SERPINA5. Acrosin is the major protease of mammalian spermatozoa. It is a serine protease of trypsin-like cleavage specificity, it is synthesized in a zymogen form, proacrosin and stored in the acrosome. This is Acrosin (Acr) from Mus musculus (Mouse).